A 567-amino-acid chain; its full sequence is MPQRGHPSQERLWALPSLPMAHGPGSEVEGLLDLSFLTEEEQEAISDVLKRDAHLRQLEEGRVSKLRASLEDPWQLKILTGDWFQEARSQRHHHAHFGSDLVRASIRRKKSPKGDQALGSDGEAEAAGEDTIEGEPESRVSIEVAAPERSTETQGPDLSSPYVPSKASEGQEEEPQDHECELEAPGEGGVQVAEADPELDPEQKAEQESQPTPAQSKATSKILENGEEAPGLGPSLDRMLSSSSSVSSLNSSTLSGSLMSLSGEEAGTVQVRGSVLFSLHYEPGTSELRVQVIQCQGLAAARRRRSDPYVKSYLLPDKQSKRKTSVKKRNLNPIFNETLRHSVQQADLPGRVLSLSVWHRESLGRNIFLGEVEVPLDTWNWDSEATWLPLQPRVPPSPDELPSRGLLSLSLKYVPAGSEGGGQPQSGELHFWVKEAQSLVPLRPGSLDTYIQCSVLPDDSRASRQRTRVVRRSLSPVFNHTMVYDGFGPADLRQACAELSLWDHGALASRQLGGTRLSLGTGSSYGLQVPWMDSTPEEKQLWQTLLERPCEWVDGLLPLRTNLVPRA.

One can recognise a RabBD domain in the interval 31–87 (LLDLSFLTEEEQEAISDVLKRDAHLRQLEEGRVSKLRASLEDPWQLKILTGDWFQEA). The tract at residues 103–255 (RASIRRKKSP…VSSLNSSTLS (153 aa)) is disordered. Serine 120 carries the phosphoserine modification. Acidic residues-rich tracts occupy residues 122-135 (GEAE…IEGE) and 170-184 (GQEE…ELEA). Residues 208 to 219 (ESQPTPAQSKAT) are compositionally biased toward polar residues. Serine 220 carries the phosphoserine modification. Residues 235–255 (SLDRMLSSSSSVSSLNSSTLS) are compositionally biased toward low complexity. C2 domains follow at residues 271 to 390 (VRGS…WLPL) and 403 to 532 (SRGL…VPWM).

In terms of assembly, monomer. Binds NCF2 and NRXN1. Binds RAB27A that has been activated by GTP-binding via its N-terminus. In terms of tissue distribution, highly expressed in lung. Detected at lower levels in spleen, liver and kidney, and at very low levels in heart, brain and skeletal muscle. Expressed in cytotoxic T-lymphocytes (CTL).

It localises to the endomembrane system. The protein localises to the cell membrane. Its function is as follows. Binds phosphatidylinositol 3,4,5-trisphosphate. May play a role in vesicle trafficking. Acts as a RAB27A effector protein and may play a role in cytotoxic granule exocytosis in lymphocytes. The polypeptide is Synaptotagmin-like protein 1 (Sytl1) (Mus musculus (Mouse)).